Here is a 635-residue protein sequence, read N- to C-terminus: Arabinoxylan arabinofuranohydrolase (635 aa).

An N-terminal signal peptide occupies residues methionine 1 to alanine 26. The Proton acceptor role is filled by aspartate 49. Glutamate 248 serves as the catalytic Proton donor. Asparagine 311 contacts substrate. CBM6 domains are found at residues threonine 379–threonine 508 and threonine 517–serine 634. Ca(2+) is bound by residues glutamate 382, glutamate 384, asparagine 406, leucine 407, aspartate 503, glutamate 520, glutamate 522, aspartate 539, tyrosine 544, aspartate 620, tryptophan 624, aspartate 625, and aspartate 629.

The protein belongs to the glycosyl hydrolase 43 family.

The protein resides in the secreted. The enzyme catalyses Hydrolysis of terminal non-reducing alpha-L-arabinofuranoside residues in alpha-L-arabinosides.. The protein operates within glycan degradation; xylan degradation. Activated by calcium and magnesium. Inhibited by copper. Functionally, cleaves arabinose units from O-2- or O-3-monosubstituted xylose residues, thereby assisting in arabinoxylan (AX) and short-chain arabinoxylo-oligosaccharide (AXOS) degradation. Preferres wheat flour xylan over oat spelt xylan as substrate. Does not display endoxylanase activity. The sequence is that of Arabinoxylan arabinofuranohydrolase (xynD) from Paenibacillus polymyxa (Bacillus polymyxa).